The sequence spans 211 residues: Small ribosomal subunit protein uS3 (211 aa).

Positions 38–106 constitute a KH type-2 domain; that stretch reads LRKFIKKAFY…NIELNIIEVK (69 aa).

This sequence belongs to the universal ribosomal protein uS3 family. Part of the 30S ribosomal subunit. Forms a tight complex with proteins S10 and S14.

Its function is as follows. Binds the lower part of the 30S subunit head. Binds mRNA in the 70S ribosome, positioning it for translation. The chain is Small ribosomal subunit protein uS3 from Ehrlichia canis (strain Jake).